The primary structure comprises 1610 residues: Adenylate cyclase type 10 (1610 aa).

2 consecutive Guanylate cyclase domains span residues 42–179 and 293–418; these read VLMF…RLAQ and TIVF…ARMM. Positions 47 and 48 each coordinate Mg(2+). Residue 47–52 participates in ATP binding; it reads DISGFT. Residue lysine 95 participates in hydrogencarbonate binding. Aspartate 99 serves as a coordination point for Mg(2+). The ATP site is built by aspartate 99 and lysine 144. Residues valine 167, arginine 176, and methionine 337 each coordinate hydrogencarbonate. ATP-binding positions include valine 406 and 412–416; that span reads NLAAR.

This sequence belongs to the adenylyl cyclase class-4/guanylyl cyclase family. Requires Mg(2+) as cofactor. Mn(2+) is required as a cofactor. In terms of processing, cleavage may occur to generate the active 48 kDa form. As to expression, detected in airway epithelial cells and testis (at protein level). Weakly expressed in multiple tissues. Expressed in brain, heart, kidney, liver, lung, pancreas, peripheral blood leukocytes, placenta, skeletal muscle, stomach, thymus, airway epithelial cells, duodenum, jejunum and ileum. Very low level of expression in bone.

Its subcellular location is the cell membrane. The protein resides in the cytoplasm. It localises to the cytoskeleton. The protein localises to the perinuclear region. It is found in the nucleus. Its subcellular location is the cell projection. The protein resides in the cilium. It localises to the mitochondrion. It catalyses the reaction ATP = 3',5'-cyclic AMP + diphosphate. Its activity is regulated as follows. Activated by manganese or magnesium ions. In the presence of magnesium ions, the enzyme is activated by bicarbonate. In the presence of manganese ions, the enzyme is inhibited by bicarbonate. In the absence of magnesium and bicarbonate, the enzyme is weakly activated by calcium. Calcium mildly increases the enzyme activity, also in the presence of magnesium ions. Functionally, catalyzes the formation of the signaling molecule cAMP. May function as sensor that mediates responses to changes in cellular bicarbonate and CO(2) levels. Has a critical role in mammalian spermatogenesis by producing the cAMP which regulates cAMP-responsive nuclear factors indispensable for sperm maturation in the epididymis. Induces capacitation, the maturational process that sperm undergo prior to fertilization. Involved in ciliary beat regulation. The chain is Adenylate cyclase type 10 (ADCY10) from Homo sapiens (Human).